We begin with the raw amino-acid sequence, 505 residues long: uncharacterized protein (505 aa).

Polar residues predominate over residues 1–16; the sequence is MPPTASLTRSPPTASQ. Residues 1 to 474 form a disordered region; it reads MPPTASLTRS…TPPTASLTRT (474 aa). Low complexity-rich tracts occupy residues 17-33 and 40-59; these read TRTL…PRAS and TASL…PPRA. Positions 66 to 78 are enriched in polar residues; it reads SRASLTRTLSRAS. 3 stretches are compositionally biased toward low complexity: residues 96 to 122, 129 to 140, and 147 to 158; these read SLTR…PPRT, PRTSQTRTPPRA, and SRASRTRTPPRA. Polar residues-rich tracts occupy residues 165–177 and 188–200; these read SRAS…SRAS and TRTP…TRTP. Positions 201-226 are enriched in low complexity; it reads PTASLTRASRTRTPPRTSQTRTPPRA. Polar residues-rich tracts occupy residues 233 to 254, 265 to 293, 309 to 329, 345 to 365, 373 to 383, 399 to 408, and 435 to 448; these read SRAS…SRAS, TRTP…SLTR, LTRT…SLTR, TRTPSRASLTR, LTRSPPTASL, and LTRS…TRTP. Low complexity predominate over residues 453–474; it reads LRRTPPRTSLTRTPPTASLTRT.

This is an uncharacterized protein from Homo sapiens (Human).